We begin with the raw amino-acid sequence, 186 residues long: UPF0301 protein Nmul_A2478 (186 aa).

This sequence belongs to the UPF0301 (AlgH) family.

In Nitrosospira multiformis (strain ATCC 25196 / NCIMB 11849 / C 71), this protein is UPF0301 protein Nmul_A2478.